The primary structure comprises 489 residues: Serine/threonine-protein kinase BSK2 (489 aa).

The tract at residues 1–30 is disordered; that stretch reads MGCLHSKTANLPSSDDPSAPNKPESVNGDQ. The N-myristoyl glycine moiety is linked to residue G2. Residues 7–16 are compositionally biased toward polar residues; it reads KTANLPSSDD. The region spanning 56-322 is the Protein kinase domain; that stretch reads SCIVSEGGEK…QEEVASHVLM (267 aa). Residues 62 to 70 and K84 contribute to the ATP site; that span reads GGEKAPNVV. D178 serves as the catalytic Proton acceptor.

Belongs to the protein kinase superfamily. Ser/Thr protein kinase family. Post-translationally, phosphorylated by BRI1 upon brassinolide (BL) treatment.

It is found in the cell membrane. The enzyme catalyses L-seryl-[protein] + ATP = O-phospho-L-seryl-[protein] + ADP + H(+). The catalysed reaction is L-threonyl-[protein] + ATP = O-phospho-L-threonyl-[protein] + ADP + H(+). Probable serine/threonine kinase that acts as a positive regulator of brassinosteroid (BR) signaling downstream of the receptor kinase BRI1. Mediates signal transduction from BRI1 by functioning as substrate of BRI1. This is Serine/threonine-protein kinase BSK2 from Arabidopsis thaliana (Mouse-ear cress).